Reading from the N-terminus, the 845-residue chain is Protein SPA1-RELATED 3 (845 aa).

Residues 1 to 19 show a composition bias toward polar residues; it reads MEGSSNSNSRGFNTSGVSD. 2 disordered regions span residues 1–33 and 139–158; these read MEGS…LTTR and CSDS…KEIG. One can recognise a Protein kinase domain in the interval 1–297; sequence MEGSSNSNSR…MSDLLQSEFI (297 aa). Positions 301–329 form a coiled coil; the sequence is RDNLEEREAAIELRDRIEEQESLLEFLLL. WD repeat units follow at residues 532–571, 581–621, 624–664, 666–706, 710–748, 757–796, and 812–845; these read NSSN…NDNR, AGRS…LVTE, EHKK…SIGT, KTKA…IPLC, GHSK…SGIN, GHTN…PVMS, and DASQ…EMMT. The short motif at 685–699 is the DWD box element; it reads AFGSADHKVYYYDLR.

Interacts with COP1 and CO.

Its subcellular location is the nucleus. Repressor of photomorphogenesis in the light. Probably part of the COP1/SPA E3 ubiquitin-protein ligase complex. The protein is Protein SPA1-RELATED 3 (SPA3) of Arabidopsis thaliana (Mouse-ear cress).